A 197-amino-acid chain; its full sequence is Probable GTP-binding protein EngB (197 aa).

The 174-residue stretch at Glu-22–Glu-195 folds into the EngB-type G domain. Residues Gly-30 to Ser-37, Gly-57 to Thr-61, Asp-75 to Gly-78, Thr-142 to Asp-145, and Phe-174 to Ala-176 each bind GTP. Residues Ser-37 and Thr-59 each coordinate Mg(2+).

It belongs to the TRAFAC class TrmE-Era-EngA-EngB-Septin-like GTPase superfamily. EngB GTPase family. It depends on Mg(2+) as a cofactor.

In terms of biological role, necessary for normal cell division and for the maintenance of normal septation. This Exiguobacterium sp. (strain ATCC BAA-1283 / AT1b) protein is Probable GTP-binding protein EngB.